The chain runs to 515 residues: Galactose-1-phosphate uridylyltransferase (515 aa).

The protein belongs to the galactose-1-phosphate uridylyltransferase type 2 family.

The protein resides in the cytoplasm. It catalyses the reaction alpha-D-galactose 1-phosphate + UDP-alpha-D-glucose = alpha-D-glucose 1-phosphate + UDP-alpha-D-galactose. It functions in the pathway carbohydrate metabolism; galactose metabolism. Functionally, transfers the UMP unit from UDP-glucose (UDP-Glc) to Gal1P. Can also transfer the UMP unit to GlcNAc1P and GalNAc1P. Involved in the general galactose metabolism, and also involved in the lacto-N-biose I/galacto-N-biose (LNB/GNB) degradation pathway, which is important for host intestinal colonization by bifidobacteria. This Bifidobacterium longum subsp. longum (strain ATCC 15707 / DSM 20219 / JCM 1217 / NCTC 11818 / E194b) protein is Galactose-1-phosphate uridylyltransferase.